A 273-amino-acid polypeptide reads, in one-letter code: Homeobox protein ceh-43 (273 aa).

2 disordered regions span residues 47–79 and 153–204; these read NGAT…EEAF and RRSK…LVSS. A DNA-binding region (homeobox) is located at residues 102 to 161; it reads MRKPRTIYNSSQLQMLQKKFQKTQYLALPDRAALAHELGLSQTQVKIWFQNRRSKQKKQK.

This sequence belongs to the distal-less homeobox family. In terms of tissue distribution, predominantly expressed in the head hypdodermis, neuronal support cells and CAN neurons.

It localises to the nucleus. Probable transcription factor. Binds to the sequence motif 5'-ATAAT-3' in regulatory elements. Required for development of the anterior hypodermis during embryonic morphogenesis for cell adhesion; also affects embryonic and larval viability. Modulates and maintains dopaminergic neuron differentiation. May activate dopamine pathway genes in concert with ETS domain-containing protein ast-1, and homeobox proteins ceh-40 and ceh-20. This is Homeobox protein ceh-43 (ceh-43) from Caenorhabditis elegans.